Consider the following 232-residue polypeptide: Ion-translocating oxidoreductase complex subunit E (232 aa).

A run of 6 helical transmembrane segments spans residues 12-31 (LWRN…LLAV), 39-59 (LGLG…VSAL), 69-89 (IPIY…LINA), 92-112 (FGLY…CIVI), 125-145 (ALAA…LLLL), and 182-202 (PFLL…MLVG).

It belongs to the NqrDE/RnfAE family. In terms of assembly, the complex is composed of six subunits: RnfA, RnfB, RnfC, RnfD, RnfE and RnfG.

The protein resides in the cell inner membrane. Its function is as follows. Part of a membrane-bound complex that couples electron transfer with translocation of ions across the membrane. This Sodalis glossinidius (strain morsitans) protein is Ion-translocating oxidoreductase complex subunit E.